Reading from the N-terminus, the 235-residue chain is Lipoprotein-releasing system ATP-binding protein LolD (235 aa).

Positions 13–235 (LCCSNIIKRY…SNGMLKISTI (223 aa)) constitute an ABC transporter domain. 49–56 (GASGSGKS) provides a ligand contact to ATP.

It belongs to the ABC transporter superfamily. Lipoprotein translocase (TC 3.A.1.125) family. As to quaternary structure, the complex is composed of two ATP-binding proteins (LolD) and two transmembrane proteins (LolC and LolE).

Its subcellular location is the cell inner membrane. Part of the ABC transporter complex LolCDE involved in the translocation of mature outer membrane-directed lipoproteins, from the inner membrane to the periplasmic chaperone, LolA. Responsible for the formation of the LolA-lipoprotein complex in an ATP-dependent manner. This chain is Lipoprotein-releasing system ATP-binding protein LolD, found in Blochmanniella floridana.